The following is a 152-amino-acid chain: 3-hydroxyacyl-[acyl-carrier-protein] dehydratase FabZ (152 aa).

Residue His58 is part of the active site.

Belongs to the thioester dehydratase family. FabZ subfamily.

The protein resides in the cytoplasm. The enzyme catalyses a (3R)-hydroxyacyl-[ACP] = a (2E)-enoyl-[ACP] + H2O. Involved in unsaturated fatty acids biosynthesis. Catalyzes the dehydration of short chain beta-hydroxyacyl-ACPs and long chain saturated and unsaturated beta-hydroxyacyl-ACPs. This is 3-hydroxyacyl-[acyl-carrier-protein] dehydratase FabZ from Prochlorococcus marinus (strain MIT 9312).